Here is a 255-residue protein sequence, read N- to C-terminus: Electron transfer flavoprotein subunit beta (255 aa).

Alanine 2 is modified (N-acetylalanine). AMP-binding positions include alanine 9, 39–42, cysteine 66, and 123–134; these read NPFC and GKQAIDDDCNQT. Positions 183 to 205 are recognition loop; it reads ADLRLNEPRYATLPNIMKAKKKK. Lysine 200 carries the N6,N6,N6-trimethyllysine; by ETFBKMT; alternate modification. Residue lysine 200 is modified to N6-acetyllysine; alternate. N6-methyllysine; alternate is present on lysine 200. The residue at position 203 (lysine 203) is an N6,N6,N6-trimethyllysine; by ETFBKMT. N6-acetyllysine; alternate is present on lysine 210. Lysine 210 carries the post-translational modification N6-succinyllysine; alternate. Phosphoserine occurs at positions 223 and 226. Lysine 238 carries the post-translational modification N6-acetyllysine. N6-acetyllysine; alternate is present on lysine 248. Lysine 248 is modified (N6-succinyllysine; alternate).

The protein belongs to the ETF beta-subunit/FixA family. Heterodimer composed of ETFA and ETFB. Identified in a complex that contains ETFA, ETFB and ETFRF1. Interacts with ACADM. Post-translationally, methylated. Trimethylation at Lys-200 and Lys-203 may negatively regulate the activity in electron transfer from acyl-CoA dehydrogenases.

The protein resides in the mitochondrion matrix. Heterodimeric electron transfer flavoprotein that accepts electrons from several mitochondrial dehydrogenases, including acyl-CoA dehydrogenases, glutaryl-CoA and sarcosine dehydrogenase. It transfers the electrons to the main mitochondrial respiratory chain via ETF-ubiquinone oxidoreductase. Required for normal mitochondrial fatty acid oxidation and normal amino acid metabolism. ETFB binds an AMP molecule that probably has a purely structural role. The polypeptide is Electron transfer flavoprotein subunit beta (Bos taurus (Bovine)).